The following is a 247-amino-acid chain: C-X-C motif chemokine 16 (247 aa).

Positions 1–26 (MRRGFGPLALTLFLFFFALLTLPGDG) are cleaved as a signal peptide. Residues 27-198 (NQGSVAGSCY…EPGAGAGTQA (172 aa)) are Extracellular-facing. 2 cysteine pairs are disulfide-bonded: Cys-35–Cys-65 and Cys-37–Cys-79. A disordered region spans residues 120–152 (IPEATEGKPPDTSTAVQFQSTQQSTFPSGAPSL). The span at 131-147 (TSTAVQFQSTQQSTFPS) shows a compositional bias: low complexity. The helical transmembrane segment at 199–219 (LVPVLSLLAIVFFLVAAMVCV) threads the bilayer. Topologically, residues 220–247 (LCNRRVTRQSSSGLQLCYTPVEPRPQGL) are cytoplasmic.

It belongs to the intercrine alpha (chemokine CxC) family. Post-translationally, glycosylated.

The protein resides in the membrane. In terms of biological role, induces a strong chemotactic response. Induces calcium mobilization. Binds to CXCR6/Bonzo. Also acts as a scavenger receptor on macrophages, which specifically binds to OxLDL (oxidized low density lipoprotein), suggesting that it may be involved in pathophysiology such as atherogenesis. The protein is C-X-C motif chemokine 16 (Cxcl16) of Rattus norvegicus (Rat).